A 364-amino-acid chain; its full sequence is MTDILNLTYEELEAFMTAELGEPRFRARQVWQWLWQKCARSFDEMTNVSKATRARLAEKAVITWPEVETVQKSADGTTKFLLRLADGALVETVLIPSASREGTLRITQCLSCQVGCAMGCTFCSTGTMGFERNMTMGEILGQVLVARAHLGDSRPDHPILRNLVFMGMGEPLLNLNEVMRSLRTLNDEFGLSFSPRRITVSTCGIEKGLRELGESGLAFLAVSLHAPNQEIRKRIMPKAAHWHLDDLITALESYPLKTRERVTFEYLLLGGVNDGIEHARELVRLVSRTKGKLNLIVYNPAEGDPYDAPTPERILAFEQYLWSKNITAIIRKSKGQDIKAACGQLKASELQRGTASAGADAPED.

Glu91 functions as the Proton acceptor in the catalytic mechanism. The region spanning 102–337 is the Radical SAM core domain; that stretch reads GTLRITQCLS…AIIRKSKGQD (236 aa). A disulfide bridge connects residues Cys109 and Cys342. [4Fe-4S] cluster is bound by residues Cys116, Cys120, and Cys123. S-adenosyl-L-methionine is bound by residues 169–170, Ser201, 223–225, and Asn299; these read GE and SLH. The S-methylcysteine intermediate role is filled by Cys342.

This sequence belongs to the radical SAM superfamily. RlmN family. The cofactor is [4Fe-4S] cluster.

It localises to the cytoplasm. The catalysed reaction is adenosine(2503) in 23S rRNA + 2 reduced [2Fe-2S]-[ferredoxin] + 2 S-adenosyl-L-methionine = 2-methyladenosine(2503) in 23S rRNA + 5'-deoxyadenosine + L-methionine + 2 oxidized [2Fe-2S]-[ferredoxin] + S-adenosyl-L-homocysteine. It carries out the reaction adenosine(37) in tRNA + 2 reduced [2Fe-2S]-[ferredoxin] + 2 S-adenosyl-L-methionine = 2-methyladenosine(37) in tRNA + 5'-deoxyadenosine + L-methionine + 2 oxidized [2Fe-2S]-[ferredoxin] + S-adenosyl-L-homocysteine. In terms of biological role, specifically methylates position 2 of adenine 2503 in 23S rRNA and position 2 of adenine 37 in tRNAs. m2A2503 modification seems to play a crucial role in the proofreading step occurring at the peptidyl transferase center and thus would serve to optimize ribosomal fidelity. The polypeptide is Dual-specificity RNA methyltransferase RlmN (Nitratidesulfovibrio vulgaris (strain DP4) (Desulfovibrio vulgaris)).